A 288-amino-acid polypeptide reads, in one-letter code: Probable pectinesterase 56 (288 aa).

The N-terminal stretch at 1–27 is a signal peptide; that stretch reads MAMTSTMQLLVLSFLVIASLFLGATVA. 2 N-linked (GlcNAc...) asparagine glycosylation sites follow: Asn-55 and Asn-95. Substrate-binding residues include Thr-120 and Gln-150. Asp-173 functions as the Proton donor in the catalytic mechanism. Catalysis depends on Asp-194, which acts as the Nucleophile. N-linked (GlcNAc...) asparagine glycosylation occurs at Asn-242. Substrate is bound by residues Arg-262 and Trp-264.

It belongs to the pectinesterase family.

It is found in the secreted. It localises to the cell wall. It catalyses the reaction [(1-&gt;4)-alpha-D-galacturonosyl methyl ester](n) + n H2O = [(1-&gt;4)-alpha-D-galacturonosyl](n) + n methanol + n H(+). It functions in the pathway glycan metabolism; pectin degradation; 2-dehydro-3-deoxy-D-gluconate from pectin: step 1/5. Acts in the modification of cell walls via demethylesterification of cell wall pectin. This is Probable pectinesterase 56 (PME56) from Arabidopsis thaliana (Mouse-ear cress).